The sequence spans 244 residues: RNA transcription, translation and transport factor protein (244 aa).

An N6-acetyllysine mark is found at Lys-20, Lys-62, and Lys-98.

The protein belongs to the RTRAF family. As to quaternary structure, homodimer. Interacts with FAM98A (via N- and C-terminus). Interacts with NIN; which may prevent phosphorylation of NIN. Interacts with POLR2A. Component of a tRNA-splicing ligase complex with FAM98B, DDX1 and RTCB. (Microbial infection) Interacts with influenza A virus (IAV) RNA polymerase subunits PA, PB1 and PB2, and nucleocapsid NP. Associates with IAV polymerase complexes both in the nucleus and cytosol. Associates with IAV ribonucleoproteins (vRNP) packaged in virions. Interacts with hepatitis C virus core protein p19. As to expression, widely expressed. Expressed at high level in heart and skeletal muscle. Expressed at intermediate level in liver, pancreas, fetal brain and fetal lung. Weakly expressed in adult brain, adult lung, placenta, fetal liver and fetal kidney. Overexpressed in many brain tumors.

It localises to the nucleus. It is found in the cytoplasm. The protein localises to the cytosol. Its subcellular location is the perinuclear region. The protein resides in the cytoskeleton. It localises to the microtubule organizing center. It is found in the centrosome. Its function is as follows. RNA-binding protein involved in modulation of mRNA transcription by Polymerase II. Component of the tRNA-splicing ligase complex and is required for tRNA ligation. May be required for RNA transport. In terms of biological role, (Microbial infection) In case of infection by influenza virus A (IVA), is involved in viral replication. The sequence is that of RNA transcription, translation and transport factor protein from Homo sapiens (Human).